Here is a 157-residue protein sequence, read N- to C-terminus: Nicotinate dehydrogenase small FeS subunit (157 aa).

A 2Fe-2S ferredoxin-type domain is found at Ile4–Val80. 8 residues coordinate [2Fe-2S] cluster: Cys42, Cys47, Cys50, Cys62, Cys101, Cys104, Cys136, and Cys138.

Heterooctamer of NDHM, NDHL, NDHS and NDHF. Dimer of heterotetramers. [2Fe-2S] cluster is required as a cofactor.

The enzyme catalyses nicotinate + NADP(+) + H2O = 6-hydroxynicotinate + NADPH + H(+). It participates in cofactor degradation; nicotinate degradation; 6-hydroxynicotinate from nicotinate: step 1/1. Its activity is regulated as follows. Reversibly inactivated by selenide and sulfide. Not inhibited by cyanide. Functionally, catalyzes the hydroxylation of nicotinate to 6-hydroxynicotinate. Also active against 2-pyrazinecarboxylic acid, but inactive against other nicotinate analogs. This Eubacterium barkeri (Clostridium barkeri) protein is Nicotinate dehydrogenase small FeS subunit (ndhS).